We begin with the raw amino-acid sequence, 266 residues long: MSEPEVTYSTVRLHKSSGLQRLVSHEEIQGPGEAGYRKCSVPWQLTVRSLGIFCFLLLVTVAVLAVKIFQYSQHKQEIHETLNHNHNCSNMQSDIKLKEEMLRNKSIDCSPGEELLESLNREQNRWYSETKTDLDSSQDTGTGVKHWFCYGTKCFYFIMSKNTWSGCKQTCQHYSLPLVKIEDEDELKFLQFQVISDSYWIGLSYDKKKKQWAWIDNGPSKLDMKTRKMNFKPGGCIFLSKTRLEDTNCNNSYFCICGKKLDHFPG.

Residues 1–44 (MSEPEVTYSTVRLHKSSGLQRLVSHEEIQGPGEAGYRKCSVPWQ) are Cytoplasmic-facing. Residues 45 to 66 (LTVRSLGIFCFLLLVTVAVLAV) form a helical; Signal-anchor for type II membrane protein membrane-spanning segment. At 67 to 266 (KIFQYSQHKQ…CGKKLDHFPG (200 aa)) the chain is on the extracellular side. N-linked (GlcNAc...) asparagine glycans are attached at residues Asn-87 and Asn-104. The region spanning 143–261 (GVKHWFCYGT…SYFCICGKKL (119 aa)) is the C-type lectin domain. Cystine bridges form between Cys-149–Cys-154, Cys-167–Cys-255, Cys-171–Cys-257, and Cys-236–Cys-249. N-linked (GlcNAc...) asparagine glycosylation occurs at Asn-250.

As to quaternary structure, homodimer; disulfide-linked. In terms of tissue distribution, mostly expressed in NK cells, but also observed on NK T and memory T-cells.

It localises to the membrane. In terms of biological role, receptor on natural killer (NK) cells for class I MHC. This chain is Killer cell lectin-like receptor 5 (Klra5), found in Mus musculus (Mouse).